We begin with the raw amino-acid sequence, 368 residues long: Phosphoserine aminotransferase (368 aa).

Position 44 (arginine 44) interacts with L-glutamate. Pyridoxal 5'-phosphate is bound by residues 78–79 (AT), tryptophan 104, threonine 157, aspartate 179, and glutamine 202. At lysine 203 the chain carries N6-(pyridoxal phosphate)lysine. 244–245 (NT) contributes to the pyridoxal 5'-phosphate binding site.

The protein belongs to the class-V pyridoxal-phosphate-dependent aminotransferase family. SerC subfamily. In terms of assembly, homodimer. Pyridoxal 5'-phosphate is required as a cofactor.

Its subcellular location is the cytoplasm. It catalyses the reaction O-phospho-L-serine + 2-oxoglutarate = 3-phosphooxypyruvate + L-glutamate. The enzyme catalyses 4-(phosphooxy)-L-threonine + 2-oxoglutarate = (R)-3-hydroxy-2-oxo-4-phosphooxybutanoate + L-glutamate. Its pathway is amino-acid biosynthesis; L-serine biosynthesis; L-serine from 3-phospho-D-glycerate: step 2/3. It functions in the pathway cofactor biosynthesis; pyridoxine 5'-phosphate biosynthesis; pyridoxine 5'-phosphate from D-erythrose 4-phosphate: step 3/5. Functionally, catalyzes the reversible conversion of 3-phosphohydroxypyruvate to phosphoserine and of 3-hydroxy-2-oxo-4-phosphonooxybutanoate to phosphohydroxythreonine. This is Phosphoserine aminotransferase from Neisseria gonorrhoeae (strain ATCC 700825 / FA 1090).